Here is a 260-residue protein sequence, read N- to C-terminus: GDSL esterase/lipase WDL1 (260 aa).

An N-terminal signal peptide occupies residues 1-35; sequence MLGFAPAPGRPLFVLFGSSIVQFSFSNGGWGAALA. The active-site Nucleophile is the serine 18. N-linked (GlcNAc...) asparagine glycans are attached at residues asparagine 83 and asparagine 150. Catalysis depends on residues aspartate 191 and histidine 194.

Belongs to the 'GDSL' lipolytic enzyme family. Highly expressed in panicles. Expressed in shoots, mature flowers and seeds.

It is found in the endoplasmic reticulum. Involved in the organization of leaf cuticle and wax crystals. The sequence is that of GDSL esterase/lipase WDL1 from Oryza sativa subsp. japonica (Rice).